We begin with the raw amino-acid sequence, 372 residues long: MEASSGTAGPAVLLLILALLLTESQGSRSQGTHTLRYDVTACFLEGSEQTRLLVLIYVDDELFLRYNGDRRSAKPWACWIKGHGGDETCTREAENLPKEEERLREMMADMINQKGHDKGPYTLQATLDCELQRNGSTRGFWHLGYEGRNLLTFDQKTLTWTMDVPFTQQKKTFEPRAPKADLVKTFLDETCPARLQRHLASLSNVLPDTGSPVVIVTCRNYPVGRITLTCRAFNLSSRVATLLWLRDGKPVQQDVFGPGTILPSGDGTYQTWVSIRVLPGQEPQFACNLRHSNRTIMQTAVSGESMGWPSASWATRQEAEGPHRTHNDHVVDGGLVTGNANKDSPDASSCATASAISAFPVVVLSVALPRAN.

The N-terminal stretch at 1–26 (MEASSGTAGPAVLLLILALLLTESQG) is a signal peptide. Positions 28–119 (RSQGTHTLRY…MINQKGHDKG (92 aa)) are alpha-1. Intrachain disulfides connect Cys-78/Cys-89, Cys-129/Cys-191, and Cys-230/Cys-287. The interval 120–210 (PYTLQATLDC…SLSNVLPDTG (91 aa)) is alpha-2. Residues Asn-134, Asn-234, and Asn-293 are each glycosylated (N-linked (GlcNAc...) asparagine). One can recognise an Ig-like C1-type domain in the interval 192–302 (PARLQRHLAS…NRTIMQTAVS (111 aa)). The tract at residues 211–339 (SPVVIVTCRN…VVDGGLVTGN (129 aa)) is alpha-3. A disordered region spans residues 308–349 (WPSASWATRQEAEGPHRTHNDHVVDGGLVTGNANKDSPDASS). Basic and acidic residues predominate over residues 317-331 (QEAEGPHRTHNDHVV). The tract at residues 340–348 (ANKDSPDAS) is connecting peptide. Ser-349 carries the GPI-anchor amidated serine lipid modification. Residues 350 to 372 (CATASAISAFPVVVLSVALPRAN) constitute a propeptide, removed in mature form.

It belongs to the MHC class I family. In terms of assembly, heterodimer with B2M. As to expression, ubiquitously expressed in neonatal and adult tissues.

It localises to the cell membrane. Its function is as follows. Binds to heparan sulfate proteoglycans on the surface of fibroblast cells. The protein is MHC class I-like protein MILL2 of Rattus norvegicus (Rat).